The primary structure comprises 191 residues: dTTP/UTP pyrophosphatase (191 aa).

Catalysis depends on D75, which acts as the Proton acceptor.

This sequence belongs to the Maf family. YhdE subfamily. A divalent metal cation serves as cofactor.

The protein localises to the cytoplasm. The enzyme catalyses dTTP + H2O = dTMP + diphosphate + H(+). It carries out the reaction UTP + H2O = UMP + diphosphate + H(+). Nucleoside triphosphate pyrophosphatase that hydrolyzes dTTP and UTP. May have a dual role in cell division arrest and in preventing the incorporation of modified nucleotides into cellular nucleic acids. The protein is dTTP/UTP pyrophosphatase of Aliivibrio fischeri (strain ATCC 700601 / ES114) (Vibrio fischeri).